A 197-amino-acid chain; its full sequence is Adenylylsulfatase HINT3 (197 aa).

A disordered region spans residues 14–43 (NPPGPNPTRDPTLRVSDCSSGSSGDGKVES). The region spanning 51–158 (VFCKIIRGES…IPRKERDCLW (108 aa)) is the HIT domain. The Histidine triad motif motif lies at 143–147 (HTHIH). The Tele-AMP-histidine intermediate role is filled by His-145. His-147 lines the substrate pocket.

The protein localises to the peroxisome. It carries out the reaction adenosine 5'-phosphosulfate + H2O = sulfate + AMP + 2 H(+). Possesses adenylylsulfatase activity in vitro. This is Adenylylsulfatase HINT3 from Arabidopsis thaliana (Mouse-ear cress).